Consider the following 159-residue polypeptide: Deoxyuridine 5'-triphosphate nucleotidohydrolase (159 aa).

Substrate contacts are provided by residues 78-80 (RSG), Asn91, 95-97 (LID), and Met105.

It belongs to the dUTPase family. The cofactor is Mg(2+).

The enzyme catalyses dUTP + H2O = dUMP + diphosphate + H(+). Its pathway is pyrimidine metabolism; dUMP biosynthesis; dUMP from dCTP (dUTP route): step 2/2. Functionally, this enzyme is involved in nucleotide metabolism: it produces dUMP, the immediate precursor of thymidine nucleotides and it decreases the intracellular concentration of dUTP so that uracil cannot be incorporated into DNA. This is Deoxyuridine 5'-triphosphate nucleotidohydrolase from Buchnera aphidicola subsp. Schizaphis graminum (strain Sg).